Consider the following 100-residue polypeptide: UPF0251 protein swp_0615 (100 aa).

The protein belongs to the UPF0251 family.

The polypeptide is UPF0251 protein swp_0615 (Shewanella piezotolerans (strain WP3 / JCM 13877)).